The chain runs to 92 residues: PqqA binding protein (92 aa).

It belongs to the PqqD family. Monomer. Interacts with PqqE.

It functions in the pathway cofactor biosynthesis; pyrroloquinoline quinone biosynthesis. Its function is as follows. Functions as a PqqA binding protein and presents PqqA to PqqE, in the pyrroloquinoline quinone (PQQ) biosynthetic pathway. In Xanthomonas euvesicatoria pv. vesicatoria (strain 85-10) (Xanthomonas campestris pv. vesicatoria), this protein is PqqA binding protein.